Reading from the N-terminus, the 1146-residue chain is Integrin alpha-PS1 (1146 aa).

The signal sequence occupies residues Met1 to Thr30. Residues Cys31–Trp1085 lie on the Extracellular side of the membrane. 7 FG-GAP repeats span residues Gln38–Cys105, Leu121–Val186, Arg193–Arg245, His254–Asp303, Asn304–Met366, Lys367–Ser422, and Glu432–Leu494. N-linked (GlcNAc...) asparagine glycosylation is found at Asn68, Asn86, and Asn147. N-linked (GlcNAc...) asparagine glycans are attached at residues Asn470, Asn511, Asn657, Asn680, Asn711, Asn718, Asn761, and Asn928. The segment at Tyr938 to Val958 is disordered. Residues Ser942 to Gln952 show a composition bias toward basic and acidic residues. A glycan (N-linked (GlcNAc...) asparagine) is linked at Asn1027. Residues Leu1086–Leu1106 traverse the membrane as a helical segment. At Trp1107–Phe1146 the chain is on the cytoplasmic side.

This sequence belongs to the integrin alpha chain family. Heterodimer of an alpha and a beta subunit. The alpha subunit is composed of a heavy and a light chain linked by a disulfide bond. Alpha-PS1 associates with beta-PS. In terms of tissue distribution, expressed in follicle cells (at protein level). At syncytial blastoderm stage, expressed in the ectoderm but not in the mesodermal precursors. At embryonic stage 7, expressed in dorsal and ventrolateral ectoderm and in some yolk nuclei. At late stage 10, expression is homogeneous in the ectoderm and is particularly abundant in the anterior and posterior midgut primordia. At stage 11, strongly expressed in a metameric pattern in the ectoderm, in the proctodeum and in the posterior midgut primordium. At stage 12, accumulates at the segment boundaries that start to become morphologically visible, similar expression pattern is observed in the central nervous system. In third larval instar wing imaginal disk, strongly expressed in the dorsal compartment, in the adepithelial cells and in patches on the peripodial membrane covering the imaginal disk to the outside.

It is found in the apical cell membrane. It localises to the lateral cell membrane. The protein resides in the basal cell membrane. In terms of biological role, integrin alpha-PS1/beta-PS is a receptor for laminin. In Drosophila melanogaster (Fruit fly), this protein is Integrin alpha-PS1 (mew).